The sequence spans 138 residues: MSFGEIIVILVVAILVLGPDKLPEAIVQIAKILKAVKRNIDDAKSSIEKEIRINDLKEEAKKYKDEFSSTNENIRKKLSFEEFDDLKRDILDKTKVDLTFDSRDDKVKNNLSGQNLNTEEKPNLSKLETQDKNGKINV.

The helical transmembrane segment at 2 to 18 (SFGEIIVILVVAILVLG) threads the bilayer. The tract at residues 109 to 138 (NNLSGQNLNTEEKPNLSKLETQDKNGKINV) is disordered. Positions 118–138 (TEEKPNLSKLETQDKNGKINV) are enriched in basic and acidic residues.

Belongs to the TatB family. In terms of assembly, the Tat system comprises two distinct complexes: a TatABC complex, containing multiple copies of TatA, TatB and TatC subunits, and a separate TatA complex, containing only TatA subunits. Substrates initially bind to the TatABC complex, which probably triggers association of the separate TatA complex to form the active translocon.

The protein resides in the cell inner membrane. In terms of biological role, part of the twin-arginine translocation (Tat) system that transports large folded proteins containing a characteristic twin-arginine motif in their signal peptide across membranes. Together with TatC, TatB is part of a receptor directly interacting with Tat signal peptides. TatB may form an oligomeric binding site that transiently accommodates folded Tat precursor proteins before their translocation. The chain is Sec-independent protein translocase protein TatB from Campylobacter jejuni subsp. jejuni serotype O:2 (strain ATCC 700819 / NCTC 11168).